The chain runs to 144 residues: 3-dehydroquinate dehydratase (144 aa).

Tyr23 functions as the Proton acceptor in the catalytic mechanism. Substrate contacts are provided by Asn74, His80, and Asp87. His100 functions as the Proton donor in the catalytic mechanism. Substrate contacts are provided by residues 101-102 (LS) and Arg111.

This sequence belongs to the type-II 3-dehydroquinase family. In terms of assembly, homododecamer.

The enzyme catalyses 3-dehydroquinate = 3-dehydroshikimate + H2O. It participates in metabolic intermediate biosynthesis; chorismate biosynthesis; chorismate from D-erythrose 4-phosphate and phosphoenolpyruvate: step 3/7. Functionally, catalyzes a trans-dehydration via an enolate intermediate. In Haemophilus ducreyi (strain 35000HP / ATCC 700724), this protein is 3-dehydroquinate dehydratase.